The following is a 587-amino-acid chain: Nucleoporin ndc-1 (587 aa).

Topologically, residues 1–79 (MMGENSSAYT…FHSEIDVRKK (79 aa)) are cytoplasmic. Residues 32-55 (ASTSATSSPNLRKSPNRGFSSPRA) are disordered. The chain crosses the membrane as a helical span at residues 80–100 (LASFVCGAAVALSFIVTVSIL). At 101 to 121 (KLSIWAPFSSVQDSLTWWLYP) the chain is on the perinuclear space side. The chain crosses the membrane as a helical span at residues 122–142 (TSWPVTLFIWLSSVAWTFLII). The Cytoplasmic portion of the chain corresponds to 143 to 161 (HQFCTVTQVPRIPITDTYA). The helical transmembrane segment at 162 to 182 (WAGAALEFVHRLIFVYTAFTV) threads the bilayer. At 183–187 (SESSF) the chain is on the perinuclear space side. A helical membrane pass occupies residues 188–208 (FEDFAWIAIAFSVAISSALVI). Over 209–255 (FRSDFHLNFSNVQVNSFKTLIDFAKSLPYGSLAETSGVDAAIAYTAA) the chain is Cytoplasmic. The helical transmembrane segment at 256 to 276 (MALTVFGSPLLWGFSAWWLLI) threads the bilayer. At 277–281 (NIQFH) the chain is on the perinuclear space side. The helical transmembrane segment at 282–302 (LVLFGVCFAQQFFAKIFMKIV) threads the bilayer. The Cytoplasmic portion of the chain corresponds to 303 to 587 (NQIVMKPMKF…TIKLVCAEEI (285 aa)).

This sequence belongs to the NDC1 family.

It localises to the nucleus. Its subcellular location is the nuclear pore complex. The protein resides in the nucleus membrane. Component of the nuclear pore complex (NPC), which plays a key role in de novo assembly and insertion of NPC in the nuclear envelope. This is Nucleoporin ndc-1 (npp-22) from Caenorhabditis briggsae.